The primary structure comprises 314 residues: 3'-5' exoribonuclease YhaM (314 aa).

The HD domain occupies 163 to 279 (HVVSMLHLAK…LHYIDNLDAK (117 aa)).

The protein belongs to the YhaM family.

Functionally, shows a 3'-5' exoribonuclease activity. The protein is 3'-5' exoribonuclease YhaM of Bacillus pumilus (strain SAFR-032).